The sequence spans 328 residues: GTPase Obg (328 aa).

The Obg domain maps to Tyr2–Val160. An OBG-type G domain is found at Ala161–Lys326. Residues Gly167–Ser174, Phe192–Ile196, Asp213–Gly216, Asn280–Asp283, and Ser307–Tyr309 contribute to the GTP site. Positions 174 and 194 each coordinate Mg(2+).

The protein belongs to the TRAFAC class OBG-HflX-like GTPase superfamily. OBG GTPase family. In terms of assembly, monomer. Mg(2+) is required as a cofactor.

It localises to the cytoplasm. An essential GTPase which binds GTP, GDP and possibly (p)ppGpp with moderate affinity, with high nucleotide exchange rates and a fairly low GTP hydrolysis rate. Plays a role in control of the cell cycle, stress response, ribosome biogenesis and in those bacteria that undergo differentiation, in morphogenesis control. This Borreliella burgdorferi (strain ATCC 35210 / DSM 4680 / CIP 102532 / B31) (Borrelia burgdorferi) protein is GTPase Obg.